The primary structure comprises 95 residues: Sec-independent protein translocase protein TatA (95 aa).

The chain crosses the membrane as a helical span at residues 1–21; that stretch reads MGSMSVWHWVIVAVVVMLLFG. A disordered region spans residues 42–95; it reads GMADDETQPNTATSVPPVGPNDPVRTLPHQGAPGTAPQPPHVQPHVPAGDHKAV.

Belongs to the TatA/E family. The Tat system comprises two distinct complexes: a TatABC complex, containing multiple copies of TatA, TatB and TatC subunits, and a separate TatA complex, containing only TatA subunits. Substrates initially bind to the TatABC complex, which probably triggers association of the separate TatA complex to form the active translocon.

It localises to the cell inner membrane. Functionally, part of the twin-arginine translocation (Tat) system that transports large folded proteins containing a characteristic twin-arginine motif in their signal peptide across membranes. TatA could form the protein-conducting channel of the Tat system. This chain is Sec-independent protein translocase protein TatA, found in Methylorubrum extorquens (strain PA1) (Methylobacterium extorquens).